The sequence spans 429 residues: Glutamate-1-semialdehyde 2,1-aminomutase 2 (429 aa).

Lys268 bears the N6-(pyridoxal phosphate)lysine mark.

Belongs to the class-III pyridoxal-phosphate-dependent aminotransferase family. HemL subfamily. In terms of assembly, homodimer. Pyridoxal 5'-phosphate serves as cofactor.

Its subcellular location is the cytoplasm. It catalyses the reaction (S)-4-amino-5-oxopentanoate = 5-aminolevulinate. It functions in the pathway porphyrin-containing compound metabolism; protoporphyrin-IX biosynthesis; 5-aminolevulinate from L-glutamyl-tRNA(Glu): step 2/2. This Bacillus cereus (strain ATCC 10987 / NRS 248) protein is Glutamate-1-semialdehyde 2,1-aminomutase 2.